A 675-amino-acid chain; its full sequence is 1,4-alpha-glucan branching enzyme TK1436 (675 aa).

Glutamate 183 (nucleophile) is an active-site residue. Arginine 261 and glycine 278 together coordinate substrate. Aspartate 354 (proton donor) is an active-site residue. The substrate site is built by tryptophan 407, aspartate 467, and glutamine 476. Disordered regions lie at residues 537–563 (PELE…KVLT) and 581–627 (EETR…LSIK). Composition is skewed to basic and acidic residues over residues 549–563 (PPEK…KVLT) and 581–595 (EETR…EASK). Over residues 596 to 616 (RGKRKSSKSKRLPRKVSKKAP) the composition is skewed to basic residues.

It belongs to the glycosyl hydrolase 57 family. As to quaternary structure, monomer.

It carries out the reaction Transfers a segment of a (1-&gt;4)-alpha-D-glucan chain to a primary hydroxy group in a similar glucan chain.. In terms of biological role, catalyzes the formation of branch points in alpha-glucans by cleavage of an alpha-1,4 glycosidic bond and subsequent transfer of the cleaved-off oligosaccharide to a new alpha-1,6 position. The branch chain-length distribution of the reaction products shows degree of polymerization (DP) of 5 to 30, with two local maxima at DP 6 and DP 11. Exhibits an alpha-retaining catalytic mechanism. Does not display alpha-galactosidase or pullulanase activity, since melibiose and pullulan are not substrates. Is not able to catalyze the hydrolysis or transglycosylation of maltoheptaose, suggesting that the TK1436 protein contains neither alpha-amylase nor 4-alpha-glucanotransferase activity. The chain is 1,4-alpha-glucan branching enzyme TK1436 from Thermococcus kodakarensis (strain ATCC BAA-918 / JCM 12380 / KOD1) (Pyrococcus kodakaraensis (strain KOD1)).